The following is a 307-amino-acid chain: L-carnitine dehydrogenase (307 aa).

8-13 (GTGVIG) is an NAD(+) binding site.

Belongs to the 3-hydroxyacyl-CoA dehydrogenase family. L-carnitine dehydrogenase subfamily. Homodimer.

It localises to the cytoplasm. The catalysed reaction is carnitine + NAD(+) = 3-dehydrocarnitine + NADH + H(+). The protein operates within amine and polyamine metabolism; carnitine metabolism. Its function is as follows. Catalyzes the NAD(+)-dependent oxidation of L-carnitine to 3-dehydrocarnitine. The protein is L-carnitine dehydrogenase of Oceanobacillus iheyensis (strain DSM 14371 / CIP 107618 / JCM 11309 / KCTC 3954 / HTE831).